Here is a 228-residue protein sequence, read N- to C-terminus: Heptaprenylglyceryl phosphate synthase (228 aa).

Position 12 (lysine 12) interacts with sn-glycerol 1-phosphate. Residues aspartate 14 and serine 40 each coordinate Mg(2+). Residues 159–164 (YLEYSG), glycine 189, and 209–210 (GN) contribute to the sn-glycerol 1-phosphate site.

Belongs to the GGGP/HepGP synthase family. Group I subfamily. Homodimer. Mg(2+) is required as a cofactor.

The enzyme catalyses sn-glycerol 1-phosphate + all-trans-heptaprenyl diphosphate = 3-heptaprenyl-sn-glycero-1-phosphate + diphosphate. It functions in the pathway membrane lipid metabolism; glycerophospholipid metabolism. Prenyltransferase that catalyzes in vivo the transfer of the heptaprenyl moiety of heptaprenyl pyrophosphate (HepPP; 35 carbon atoms) to the C3 hydroxyl of sn-glycerol-1-phosphate (G1P), producing heptaprenylglyceryl phosphate (HepGP). This reaction is an ether-bond-formation step in the biosynthesis of archaea-type G1P-based membrane lipids found in Bacillales. In Bacillus licheniformis (strain ATCC 14580 / DSM 13 / JCM 2505 / CCUG 7422 / NBRC 12200 / NCIMB 9375 / NCTC 10341 / NRRL NRS-1264 / Gibson 46), this protein is Heptaprenylglyceryl phosphate synthase.